An 81-amino-acid chain; its full sequence is ATP synthase subunit c (81 aa).

The next 2 helical transmembrane spans lie at 5 to 25 and 57 to 77; these read IAAG…IGAG and VGLV…FVFA.

This sequence belongs to the ATPase C chain family. F-type ATPases have 2 components, F(1) - the catalytic core - and F(0) - the membrane proton channel. F(1) has five subunits: alpha(3), beta(3), gamma(1), delta(1), epsilon(1). F(0) has three main subunits: a(1), b(2) and c(10-14). The alpha and beta chains form an alternating ring which encloses part of the gamma chain. F(1) is attached to F(0) by a central stalk formed by the gamma and epsilon chains, while a peripheral stalk is formed by the delta and b chains.

Its subcellular location is the cell membrane. F(1)F(0) ATP synthase produces ATP from ADP in the presence of a proton or sodium gradient. F-type ATPases consist of two structural domains, F(1) containing the extramembraneous catalytic core and F(0) containing the membrane proton channel, linked together by a central stalk and a peripheral stalk. During catalysis, ATP synthesis in the catalytic domain of F(1) is coupled via a rotary mechanism of the central stalk subunits to proton translocation. Its function is as follows. Key component of the F(0) channel; it plays a direct role in translocation across the membrane. A homomeric c-ring of between 10-14 subunits forms the central stalk rotor element with the F(1) delta and epsilon subunits. This chain is ATP synthase subunit c, found in Mycobacterium marinum (strain ATCC BAA-535 / M).